The sequence spans 66 residues: MMIPIRCFTCGSLIADKWQPFITRVNAGENPGKVLDDLGVKRYCCRRMLLSHIDIISEVIHYTRPI.

The Zn(2+) site is built by C7, C10, C44, and C45.

Belongs to the archaeal Rpo10/eukaryotic RPB10 RNA polymerase subunit family. In terms of assembly, part of the RNA polymerase complex. It depends on Zn(2+) as a cofactor.

Its subcellular location is the cytoplasm. The enzyme catalyses RNA(n) + a ribonucleoside 5'-triphosphate = RNA(n+1) + diphosphate. DNA-dependent RNA polymerase (RNAP) catalyzes the transcription of DNA into RNA using the four ribonucleoside triphosphates as substrates. This Saccharolobus islandicus (strain Y.N.15.51 / Yellowstone #2) (Sulfolobus islandicus) protein is DNA-directed RNA polymerase subunit Rpo10.